A 582-amino-acid polypeptide reads, in one-letter code: Membrane protein insertase YidC (582 aa).

A helical membrane pass occupies residues 3–23; that stretch reads IQRALVITGIAVVSYLMIQAW. A disordered region spans residues 38 to 92; it reads QVAEQGNSSSSDSADLPSVQSQTDNSIPSAQSDNDLPSVSPADIAQPTPSSQRIE. The segment covering 45-58 has biased composition (low complexity); it reads SSSSDSADLPSVQS. Residues 59 to 74 are compositionally biased toward polar residues; it reads QTDNSIPSAQSDNDLP. 5 consecutive transmembrane segments (helical) span residues 357-377, 394-414, 464-484, 495-515, and 541-561; these read TVDYGWLWFISQPIFALLVFL, GVGNWGVAIILLTLIIKAIFF, LGGCLPMLVQMPVFIALYYVL, FFLWINDLSVMDPYFVLPILM, and MPMIFAVFMLWFPAGLVLYWL.

It belongs to the OXA1/ALB3/YidC family. Type 1 subfamily. Interacts with the Sec translocase complex via SecD. Specifically interacts with transmembrane segments of nascent integral membrane proteins during membrane integration.

It localises to the cell inner membrane. In terms of biological role, required for the insertion and/or proper folding and/or complex formation of integral membrane proteins into the membrane. Involved in integration of membrane proteins that insert both dependently and independently of the Sec translocase complex, as well as at least some lipoproteins. Aids folding of multispanning membrane proteins. The polypeptide is Membrane protein insertase YidC (Alcanivorax borkumensis (strain ATCC 700651 / DSM 11573 / NCIMB 13689 / SK2)).